The sequence spans 486 residues: Transmembrane protein 39A (486 aa).

A glycan (N-linked (GlcNAc...) asparagine) is linked at N31. 8 helical membrane-spanning segments follow: residues 72–92, 110–130, 155–175, 182–202, 285–305, 317–337, 418–438, and 444–464; these read SLFF…IQYI, TSLN…VMLA, LILA…WTLV, SVLN…LYCF, EVLF…LCFV, CEHL…QLLP, VLNL…YSLL, and NHTL…FKLL.

Belongs to the TMEM39 family. As to quaternary structure, interacts with SACM1L, SEC23A and SEC24A.

It localises to the endoplasmic reticulum membrane. Its function is as follows. Regulates autophagy by controlling the spatial distribution and levels of the intracellular phosphatidylinositol 4-phosphate (PtdIns(4)P) pools. Modulates (PtdIns(4)P) levels by regulating the ER-to-Golgi trafficking of the phosphatidylinositide phosphatase SACM1L. The chain is Transmembrane protein 39A (Tmem39a) from Mus musculus (Mouse).